A 200-amino-acid polypeptide reads, in one-letter code: MIAHLTGLVGQMESDRCVVDVGGVGYLVHASTRTLSALPRPPDVTRVLVETVVREDAFLLYGFAEAAERDWFRLLTTVQGVGAKVALAILSALSPGDLAGVIAAADKASLTRVSGVGARLAERILTELRDKAGRMPAGPGVTIAAPPASGGVEADALLALAGLGFRRAEAQPVVGRILARLDGKADLDVVIRESLRELAR.

Residues 1–64 form a domain I region; sequence MIAHLTGLVG…EDAFLLYGFA (64 aa). The interval 65–143 is domain II; that stretch reads EAAERDWFRL…RMPAGPGVTI (79 aa). Residues 144–147 form a flexible linker region; it reads AAPP. A domain III region spans residues 148-200; sequence ASGGVEADALLALAGLGFRRAEAQPVVGRILARLDGKADLDVVIRESLRELAR.

It belongs to the RuvA family. Homotetramer. Forms an RuvA(8)-RuvB(12)-Holliday junction (HJ) complex. HJ DNA is sandwiched between 2 RuvA tetramers; dsDNA enters through RuvA and exits via RuvB. An RuvB hexamer assembles on each DNA strand where it exits the tetramer. Each RuvB hexamer is contacted by two RuvA subunits (via domain III) on 2 adjacent RuvB subunits; this complex drives branch migration. In the full resolvosome a probable DNA-RuvA(4)-RuvB(12)-RuvC(2) complex forms which resolves the HJ.

The protein resides in the cytoplasm. Its function is as follows. The RuvA-RuvB-RuvC complex processes Holliday junction (HJ) DNA during genetic recombination and DNA repair, while the RuvA-RuvB complex plays an important role in the rescue of blocked DNA replication forks via replication fork reversal (RFR). RuvA specifically binds to HJ cruciform DNA, conferring on it an open structure. The RuvB hexamer acts as an ATP-dependent pump, pulling dsDNA into and through the RuvAB complex. HJ branch migration allows RuvC to scan DNA until it finds its consensus sequence, where it cleaves and resolves the cruciform DNA. This chain is Holliday junction branch migration complex subunit RuvA, found in Gluconacetobacter diazotrophicus (strain ATCC 49037 / DSM 5601 / CCUG 37298 / CIP 103539 / LMG 7603 / PAl5).